Reading from the N-terminus, the 398-residue chain is Dual-specificity RNA methyltransferase RlmN (398 aa).

Residue Glu119 is the Proton acceptor of the active site. The 240-residue stretch at 125–364 folds into the Radical SAM core domain; sequence EADRATLCVS…TIVRKTRGDD (240 aa). Cys132 and Cys369 are joined by a disulfide. [4Fe-4S] cluster contacts are provided by Cys139, Cys143, and Cys146. S-adenosyl-L-methionine is bound by residues 193 to 194, Ser225, 247 to 249, and Asn326; these read GE and SLH. Residue Cys369 is the S-methylcysteine intermediate of the active site.

It belongs to the radical SAM superfamily. RlmN family. Requires [4Fe-4S] cluster as cofactor.

Its subcellular location is the cytoplasm. It carries out the reaction adenosine(2503) in 23S rRNA + 2 reduced [2Fe-2S]-[ferredoxin] + 2 S-adenosyl-L-methionine = 2-methyladenosine(2503) in 23S rRNA + 5'-deoxyadenosine + L-methionine + 2 oxidized [2Fe-2S]-[ferredoxin] + S-adenosyl-L-homocysteine. It catalyses the reaction adenosine(37) in tRNA + 2 reduced [2Fe-2S]-[ferredoxin] + 2 S-adenosyl-L-methionine = 2-methyladenosine(37) in tRNA + 5'-deoxyadenosine + L-methionine + 2 oxidized [2Fe-2S]-[ferredoxin] + S-adenosyl-L-homocysteine. Its function is as follows. Specifically methylates position 2 of adenine 2503 in 23S rRNA and position 2 of adenine 37 in tRNAs. m2A2503 modification seems to play a crucial role in the proofreading step occurring at the peptidyl transferase center and thus would serve to optimize ribosomal fidelity. This Yersinia pseudotuberculosis serotype IB (strain PB1/+) protein is Dual-specificity RNA methyltransferase RlmN.